The primary structure comprises 63 residues: uncharacterized protein (63 aa).

This is an uncharacterized protein from Bdellovibrio bacteriovorus (Bacteriophage phiMH2K).